The sequence spans 296 residues: tRNA dimethylallyltransferase (296 aa).

ATP is bound at residue 11–18 (GPTAVGKT). Substrate is bound at residue 13 to 18 (TAVGKT). Residues 36–39 (DSQQ) form an interaction with substrate tRNA region.

This sequence belongs to the IPP transferase family. Monomer. It depends on Mg(2+) as a cofactor.

The enzyme catalyses adenosine(37) in tRNA + dimethylallyl diphosphate = N(6)-dimethylallyladenosine(37) in tRNA + diphosphate. In terms of biological role, catalyzes the transfer of a dimethylallyl group onto the adenine at position 37 in tRNAs that read codons beginning with uridine, leading to the formation of N6-(dimethylallyl)adenosine (i(6)A). This Streptococcus agalactiae serotype Ia (strain ATCC 27591 / A909 / CDC SS700) protein is tRNA dimethylallyltransferase.